We begin with the raw amino-acid sequence, 581 residues long: Interleukin-22 receptor subunit alpha-1 (581 aa).

The signal sequence occupies residues 1 to 15 (MRTLLTILAAGSLLA). Over 16–228 (HITEDTSDLL…VKTLPDRTWT (213 aa)) the chain is Extracellular. Fibronectin type-III domains are found at residues 18–115 (TEDT…RFSS) and 141–221 (PTYT…RVKT). A disulfide bridge connects residues cysteine 71 and cysteine 79. Asparagine 80 carries N-linked (GlcNAc...) asparagine glycosylation. Cysteine 128 and cysteine 217 form a disulfide bridge. Residues 229–249 (YSFSGAFLFSLGFLVAGLCYL) form a helical membrane-spanning segment. Over 250-581 (SYRYITKPPP…GLALTVQWES (332 aa)) the chain is Cytoplasmic. Disordered stretches follow at residues 354-493 (QAAP…SSLK) and 539-563 (PSDE…LESP). Polar residues predominate over residues 378-389 (TPQAVSETQLPS). Phosphoserine occurs at positions 410 and 414. Positions 440-449 (CSPTGLSLQE) are enriched in polar residues.

The protein belongs to the type II cytokine receptor family. In terms of assembly, heterodimer with IL10RB and with IL20RB. Interacts with FBXW12; the interaction promotes ubiquitination of IL22RA1. In terms of processing, ubiquitinated.

The protein localises to the cell membrane. In terms of biological role, component of the receptor for IL20, IL22 and IL24. Component of IL22 receptor formed by IL22RA1 and IL10RB enabling IL22 signaling via JAK/STAT pathways. IL22 also induces activation of MAPK1/MAPK3 and Akt kinases pathways. Component of one of the receptor for IL20 and IL24 formed by IL22RA1 and IL20RB also signaling through STATs activation. Mediates IL24 antiangiogenic activity as well as IL24 inhibitory effect on endothelial cell tube formation and differentiation. The polypeptide is Interleukin-22 receptor subunit alpha-1 (IL22RA1) (Bos taurus (Bovine)).